The primary structure comprises 562 residues: Arginine--tRNA ligase (562 aa).

The short motif at 121–131 (PNIAKPISMGH) is the 'HIGH' region element.

Belongs to the class-I aminoacyl-tRNA synthetase family. Monomer.

The protein resides in the cytoplasm. The enzyme catalyses tRNA(Arg) + L-arginine + ATP = L-arginyl-tRNA(Arg) + AMP + diphosphate. In Lactiplantibacillus plantarum (strain ATCC BAA-793 / NCIMB 8826 / WCFS1) (Lactobacillus plantarum), this protein is Arginine--tRNA ligase.